Consider the following 438-residue polypeptide: Methylenetetrahydrofolate--tRNA-(uracil-5-)-methyltransferase TrmFO (438 aa).

Residue G9 to G14 coordinates FAD.

The protein belongs to the MnmG family. TrmFO subfamily. The cofactor is FAD.

It localises to the cytoplasm. It catalyses the reaction uridine(54) in tRNA + (6R)-5,10-methylene-5,6,7,8-tetrahydrofolate + NADH + H(+) = 5-methyluridine(54) in tRNA + (6S)-5,6,7,8-tetrahydrofolate + NAD(+). The catalysed reaction is uridine(54) in tRNA + (6R)-5,10-methylene-5,6,7,8-tetrahydrofolate + NADPH + H(+) = 5-methyluridine(54) in tRNA + (6S)-5,6,7,8-tetrahydrofolate + NADP(+). Functionally, catalyzes the folate-dependent formation of 5-methyl-uridine at position 54 (M-5-U54) in all tRNAs. The sequence is that of Methylenetetrahydrofolate--tRNA-(uracil-5-)-methyltransferase TrmFO from Lactobacillus johnsonii (strain CNCM I-12250 / La1 / NCC 533).